The sequence spans 511 residues: 2,3-bisphosphoglycerate-independent phosphoglycerate mutase (511 aa).

A Mn(2+)-binding site is contributed by D12. The residue at position 36 (Y36) is a Phosphotyrosine. Position 62 (S62) interacts with Mn(2+). S62 serves as the catalytic Phosphoserine intermediate. Substrate is bound by residues H123, 153–154 (RD), R185, R191, 261–264 (RPDR), and K336. Mn(2+) contacts are provided by D403, H407, D444, H445, and H462.

This sequence belongs to the BPG-independent phosphoglycerate mutase family. In terms of assembly, monomer. Mn(2+) is required as a cofactor.

It catalyses the reaction (2R)-2-phosphoglycerate = (2R)-3-phosphoglycerate. It functions in the pathway carbohydrate degradation; glycolysis; pyruvate from D-glyceraldehyde 3-phosphate: step 3/5. Functionally, essential for rapid growth and for sporulation. Catalyzes the interconversion of 2-phosphoglycerate and 3-phosphoglycerate. This chain is 2,3-bisphosphoglycerate-independent phosphoglycerate mutase, found in Bacillus pumilus (strain SAFR-032).